A 384-amino-acid chain; its full sequence is S-adenosylmethionine synthase (384 aa).

H15 serves as a coordination point for ATP. Mg(2+) is bound at residue D17. Residue E43 participates in K(+) binding. The L-methionine site is built by E56 and Q99. A flexible loop region spans residues 99-109 (QSPDINQGVDR). ATP-binding positions include 164–166 (DAK), 230–231 (RF), D239, 245–246 (RK), A262, and K266. D239 contacts L-methionine. K270 contributes to the L-methionine binding site.

Belongs to the AdoMet synthase family. In terms of assembly, homotetramer; dimer of dimers. The cofactor is Mg(2+). K(+) serves as cofactor.

It localises to the cytoplasm. The enzyme catalyses L-methionine + ATP + H2O = S-adenosyl-L-methionine + phosphate + diphosphate. It participates in amino-acid biosynthesis; S-adenosyl-L-methionine biosynthesis; S-adenosyl-L-methionine from L-methionine: step 1/1. Catalyzes the formation of S-adenosylmethionine (AdoMet) from methionine and ATP. The overall synthetic reaction is composed of two sequential steps, AdoMet formation and the subsequent tripolyphosphate hydrolysis which occurs prior to release of AdoMet from the enzyme. The protein is S-adenosylmethionine synthase of Escherichia coli (strain K12 / DH10B).